The sequence spans 242 residues: NAD(P)H-hydrate epimerase (242 aa).

Residues 11 to 221 enclose the YjeF N-terminal domain; sequence AKALDAELMS…KVITKKFNLS (211 aa). Position 61-65 (61-65) interacts with (6S)-NADPHX; sequence NNGGD. Positions 62 and 128 each coordinate K(+). (6S)-NADPHX contacts are provided by residues 132 to 138 and Asp161; that span reads GFSFKGP. A K(+)-binding site is contributed by Ser164.

The protein belongs to the NnrE/AIBP family. K(+) serves as cofactor.

Its subcellular location is the cytoplasm. It is found in the mitochondrion. The protein localises to the nucleus. The enzyme catalyses (6R)-NADHX = (6S)-NADHX. It carries out the reaction (6R)-NADPHX = (6S)-NADPHX. Catalyzes the epimerization of the S- and R-forms of NAD(P)HX, a damaged form of NAD(P)H that is a result of enzymatic or heat-dependent hydration. This is a prerequisite for the S-specific NAD(P)H-hydrate dehydratase to allow the repair of both epimers of NAD(P)HX. May have a role in meiosis. The polypeptide is NAD(P)H-hydrate epimerase (mug182) (Schizosaccharomyces pombe (strain 972 / ATCC 24843) (Fission yeast)).